We begin with the raw amino-acid sequence, 372 residues long: MHNQAPIQRRKSTRIYVGNVPIGDGAPITVQSMTNTRTTDVEATVNQIKALERVGADIVRVSVPTMDAAEAFKLIKQQVSVPLVADIHFDYRIALKVAEYGVDCLRINPGNIGNEERIRMVVDCARDKNIPIRIGVNAGSLEKDLQEKYGEPTPQALLESAMRHVDHLDRLNFEQFKVSVKASDVFLAVESYRLLAKQIDQPLHLGITEAGGARSGAVKSAIGLGLLLSEGIGDTLRVSLAADPVEEIKVGFDILKSLRIRARGINFIACPTCSRQEFDVIGTVNALEQRLEDIITPMDVSIIGCVVNGPGEALVSTLGVTGGNKKSGLYEDGVRKDRLDNDDMIAQLESRIRAKASQLDEARRIDVLQVEK.

Residues cysteine 270, cysteine 273, cysteine 305, and glutamate 312 each contribute to the [4Fe-4S] cluster site.

It belongs to the IspG family. Requires [4Fe-4S] cluster as cofactor.

It catalyses the reaction (2E)-4-hydroxy-3-methylbut-2-enyl diphosphate + oxidized [flavodoxin] + H2O + 2 H(+) = 2-C-methyl-D-erythritol 2,4-cyclic diphosphate + reduced [flavodoxin]. The protein operates within isoprenoid biosynthesis; isopentenyl diphosphate biosynthesis via DXP pathway; isopentenyl diphosphate from 1-deoxy-D-xylulose 5-phosphate: step 5/6. Its function is as follows. Converts 2C-methyl-D-erythritol 2,4-cyclodiphosphate (ME-2,4cPP) into 1-hydroxy-2-methyl-2-(E)-butenyl 4-diphosphate. The protein is 4-hydroxy-3-methylbut-2-en-1-yl diphosphate synthase (flavodoxin) of Salmonella arizonae (strain ATCC BAA-731 / CDC346-86 / RSK2980).